The sequence spans 131 residues: MATRHQVRNAVVSLLYAKEMGSEMNDFVSEYLEEKRIRNDQRKFADKLFNGVCKNVNQIDNELDKYLNEYKISQIGTVERAILRLGAYEIMYEAIDKAIIINEAIELAKELAGESSPKFINGVLDRIGKVK.

It belongs to the NusB family.

Functionally, involved in transcription antitermination. Required for transcription of ribosomal RNA (rRNA) genes. Binds specifically to the boxA antiterminator sequence of the ribosomal RNA (rrn) operons. The protein is Transcription antitermination protein NusB of Campylobacter hominis (strain ATCC BAA-381 / DSM 21671 / CCUG 45161 / LMG 19568 / NCTC 13146 / CH001A).